Here is a 179-residue protein sequence, read N- to C-terminus: DELTA-actitoxin-Afr1c (179 aa).

The segment at 1–29 (SAEVAGAIIDGASLTFDVLQTVLKALGDV) is N-terminal alpha-helix that contributes to the pore. The interval 11–30 (GASLTFDVLQTVLKALGDVS) is N-terminal region. Arg31 is a binding site for an N-(acyl)-sphingosylphosphocholine. Positions 51 and 53 each coordinate N-acetyl-D-glucosamine 6-sulfate. An N-(acyl)-sphingosylphosphocholine is bound by residues Arg53, Ser54, Arg79, Gly85, Tyr113, Ser114, Trp116, Tyr133, Tyr137, Tyr138, Arg144, and Gly168. Residues 105–120 (SIPFDYNLYSNWWNVK) are trp-rich region, which is important for the binding to lipid membrane. Tyr138 lines the N-acetyl-D-glucosamine 6-sulfate pocket. Residues 144-146 (RGD) carry the Cell attachment site, crucial for protein stability motif.

The protein belongs to the actinoporin family. Sea anemone subfamily. Octamer or nonamer in membranes. Monomer in the soluble state.

The protein localises to the secreted. It is found in the nematocyst. The protein resides in the target cell membrane. Pore-forming toxin (PFT) that consists of a crown-shaped octamer or nonamer that forms cation-selective hydrophilic pores of about 1.5 nm (inside) and 13 nm (outside) and causes cytolysis. It causes cardiac stimulation. Also causes hemolysis (HC(50)=0.3 nM). Interestingly, the Phe-16 is crucial for hemolysis. Pore formation is a multi-step process that involves specific recognition of membrane sphingomyelin (but neither cholesterol nor phosphatidylcholine) using aromatic rich region and adjacent phosphocholine (POC) binding site, firm binding to the membrane (mainly driven by hydrophobic interactions) accompanied by the transfer of the N-terminal region to the lipid-water interface and finally pore formation after oligomerization of monomers. It is probable that a dimeric form is an assembly intermediate before the complete oligomerization. The formation of stable pores occurs only in vesicles composed of DOPC/SM (there is no oligomerization when the PFT is treated with vesicles of DOPC or SM alone). The transmembrane pore displays 8 lateral perforations, one at each subunit-subunit interface, partially occupied by the acyl-chain region of a bridging lipid. Each pore contains 24 lipid molecules, firmly bound to each subunit, that is, 3 lipids (L1, L2, L3, L4 and/or L5) are associated to each subunit. Lipid L1 bridges 2 subunits, whereas lipids L2 and L3 bind to sites at single subunit. In Actinia fragacea (Strawberry anemone), this protein is DELTA-actitoxin-Afr1c.